Reading from the N-terminus, the 548-residue chain is Chaperonin GroEL (548 aa).

Residues 30–33, Lys-51, 87–91, Gly-415, 479–481, and Asp-495 each bind ATP; these read TLGP, DGTTT, and NAA. A disordered region spans residues 525–548; that stretch reads PKEDKTSDASSSPAGGMGGMGGMM. Residues 539 to 548 show a composition bias toward gly residues; it reads GGMGGMGGMM.

This sequence belongs to the chaperonin (HSP60) family. As to quaternary structure, forms a cylinder of 14 subunits composed of two heptameric rings stacked back-to-back. Interacts with the co-chaperonin GroES.

The protein resides in the cytoplasm. The catalysed reaction is ATP + H2O + a folded polypeptide = ADP + phosphate + an unfolded polypeptide.. Its function is as follows. Together with its co-chaperonin GroES, plays an essential role in assisting protein folding. The GroEL-GroES system forms a nano-cage that allows encapsulation of the non-native substrate proteins and provides a physical environment optimized to promote and accelerate protein folding. The chain is Chaperonin GroEL from Buchnera aphidicola subsp. Rhopalosiphum maidis.